Here is a 44-residue protein sequence, read N- to C-terminus: Protein PsbN (44 aa).

Residues 7–29 (VATVFVSCLVLSITGYSLYIGFG) traverse the membrane as a helical segment.

This sequence belongs to the PsbN family.

It is found in the plastid. Its subcellular location is the chloroplast thylakoid membrane. Functionally, may play a role in photosystem I and II biogenesis. The polypeptide is Protein PsbN (Nephroselmis olivacea (Green alga)).